Reading from the N-terminus, the 238-residue chain is 1-(5-phosphoribosyl)-5-[(5-phosphoribosylamino)methylideneamino] imidazole-4-carboxamide isomerase (238 aa).

Residue Asp8 is the Proton acceptor of the active site. Asp129 acts as the Proton donor in catalysis.

Belongs to the HisA/HisF family.

It localises to the cytoplasm. The catalysed reaction is 1-(5-phospho-beta-D-ribosyl)-5-[(5-phospho-beta-D-ribosylamino)methylideneamino]imidazole-4-carboxamide = 5-[(5-phospho-1-deoxy-D-ribulos-1-ylimino)methylamino]-1-(5-phospho-beta-D-ribosyl)imidazole-4-carboxamide. The protein operates within amino-acid biosynthesis; L-histidine biosynthesis; L-histidine from 5-phospho-alpha-D-ribose 1-diphosphate: step 4/9. This chain is 1-(5-phosphoribosyl)-5-[(5-phosphoribosylamino)methylideneamino] imidazole-4-carboxamide isomerase, found in Lacticaseibacillus paracasei (strain ATCC 334 / BCRC 17002 / CCUG 31169 / CIP 107868 / KCTC 3260 / NRRL B-441) (Lactobacillus paracasei).